The sequence spans 228 residues: 7-cyano-7-deazaguanine synthase (228 aa).

8–18 contacts ATP; the sequence is LSGGLDSTTCL. 4 residues coordinate Zn(2+): Cys188, Cys198, Cys201, and Cys204.

Belongs to the QueC family. Requires Zn(2+) as cofactor.

It catalyses the reaction 7-carboxy-7-deazaguanine + NH4(+) + ATP = 7-cyano-7-deazaguanine + ADP + phosphate + H2O + H(+). It functions in the pathway purine metabolism; 7-cyano-7-deazaguanine biosynthesis. Its function is as follows. Catalyzes the ATP-dependent conversion of 7-carboxy-7-deazaguanine (CDG) to 7-cyano-7-deazaguanine (preQ(0)). This chain is 7-cyano-7-deazaguanine synthase, found in Legionella pneumophila (strain Paris).